A 239-amino-acid polypeptide reads, in one-letter code: Ribonuclease 3 (239 aa).

Residues 11–133 (HTAIQKKLGY…MFAAVSFDAD (123 aa)) enclose the RNase III domain. Residue Glu46 coordinates Mg(2+). The active site involves Asp50. 2 residues coordinate Mg(2+): Asp119 and Glu122. Glu122 is an active-site residue. The region spanning 160-230 (DGKTALQEAL…AKEALKWLEE (71 aa)) is the DRBM domain.

Belongs to the ribonuclease III family. Homodimer. Mg(2+) is required as a cofactor.

The protein resides in the cytoplasm. The catalysed reaction is Endonucleolytic cleavage to 5'-phosphomonoester.. In terms of biological role, digests double-stranded RNA. Involved in the processing of primary rRNA transcript to yield the immediate precursors to the large and small rRNAs (23S and 16S). Processes some mRNAs, and tRNAs when they are encoded in the rRNA operon. Processes pre-crRNA and tracrRNA of type II CRISPR loci if present in the organism. This chain is Ribonuclease 3, found in Neisseria gonorrhoeae (strain NCCP11945).